The following is a 260-amino-acid chain: NH(3)-dependent NAD(+) synthetase (260 aa).

31–38 contacts ATP; sequence GLSGGLDS. Aspartate 37 contacts Mg(2+). Arginine 112 contributes to the deamido-NAD(+) binding site. Threonine 132 lines the ATP pocket. Glutamate 137 serves as a coordination point for Mg(2+). Residues lysine 161 and serine 183 each contribute to the ATP site.

This sequence belongs to the NAD synthetase family. In terms of assembly, homodimer.

The enzyme catalyses deamido-NAD(+) + NH4(+) + ATP = AMP + diphosphate + NAD(+) + H(+). It functions in the pathway cofactor biosynthesis; NAD(+) biosynthesis; NAD(+) from deamido-NAD(+) (ammonia route): step 1/1. Functionally, catalyzes the ATP-dependent amidation of deamido-NAD to form NAD. Uses ammonia as a nitrogen source. This is NH(3)-dependent NAD(+) synthetase from Helicobacter pylori (strain P12).